A 346-amino-acid chain; its full sequence is N-acetyl-gamma-glutamyl-phosphate reductase (346 aa).

The active site involves Cys-149.

Belongs to the NAGSA dehydrogenase family. Type 1 subfamily.

Its subcellular location is the cytoplasm. The catalysed reaction is N-acetyl-L-glutamate 5-semialdehyde + phosphate + NADP(+) = N-acetyl-L-glutamyl 5-phosphate + NADPH + H(+). It participates in amino-acid biosynthesis; L-arginine biosynthesis; N(2)-acetyl-L-ornithine from L-glutamate: step 3/4. Functionally, catalyzes the NADPH-dependent reduction of N-acetyl-5-glutamyl phosphate to yield N-acetyl-L-glutamate 5-semialdehyde. The sequence is that of N-acetyl-gamma-glutamyl-phosphate reductase from Micrococcus luteus (strain ATCC 4698 / DSM 20030 / JCM 1464 / CCM 169 / CCUG 5858 / IAM 1056 / NBRC 3333 / NCIMB 9278 / NCTC 2665 / VKM Ac-2230) (Micrococcus lysodeikticus).